Consider the following 159-residue polypeptide: MMRFVPLFLACISLPAFQATEFTKCEVSHAIEDMDGYQGISLLEWTCVLFHTSGYDSQAIVKNNGSTEYGLFQISNRNWCKSSEFPESENICDISCDKFLDDELADDIVCAKKIVAIKGIDYWKAHKPMCSEKLEQWRCEKPGAPALVVPALNSETPVP.

Residues 1–19 form the signal peptide; the sequence is MMRFVPLFLACISLPAFQA. Residues 20-142 form the C-type lysozyme domain; that stretch reads TEFTKCEVSH…KLEQWRCEKP (123 aa). Disulfide bonds link Cys25/Cys139, Cys47/Cys130, Cys80/Cys96, and Cys92/Cys110. Asn64 is a glycosylation site (N-linked (GlcNAc...) asparagine). Ca(2+)-binding residues include Lys98, Asp101, Asp106, and Asp107.

It belongs to the glycosyl hydrolase 22 family. Lactose synthase (LS) is a heterodimer of a catalytic component, beta1,4-galactosyltransferase (beta4Gal-T1) and a regulatory component, alpha-lactalbumin (LA). As to expression, mammary gland specific. Secreted in milk.

Its subcellular location is the secreted. Functionally, regulatory subunit of lactose synthase, changes the substrate specificity of galactosyltransferase in the mammary gland making glucose a good acceptor substrate for this enzyme. This enables LS to synthesize lactose, the major carbohydrate component of milk. In other tissues, galactosyltransferase transfers galactose onto the N-acetylglucosamine of the oligosaccharide chains in glycoproteins. This is Alpha-lactalbumin (Lalba) from Rattus norvegicus (Rat).